The sequence spans 65 residues: Large ribosomal subunit protein bL35 (65 aa).

It belongs to the bacterial ribosomal protein bL35 family.

The polypeptide is Large ribosomal subunit protein bL35 (Laribacter hongkongensis (strain HLHK9)).